Reading from the N-terminus, the 516-residue chain is Cytochrome P450 monooxygenase asR2 (516 aa).

A helical membrane pass occupies residues 9-29; that stretch reads LNSITFSLLVFLGFVGVSQLI. N-linked (GlcNAc...) asparagine glycosylation is found at Asn248 and Asn273. Cys461 contacts heme.

Belongs to the cytochrome P450 family. It depends on heme as a cofactor.

Its subcellular location is the membrane. It participates in secondary metabolite biosynthesis; terpenoid biosynthesis. Functionally, cytochrome P450 monooxygenase; part of the gene cluster that mediates the biosynthesis of xenovulene A, an unusual meroterpenoid that has potent inhibitory effects on the human gamma-aminobutyrate A (GABAA) benzodiazepine receptor. The first step of xenovulene A biosynthesis is the biosynthesis of 3-methylorcinaldehyde performed by the non-reducing polyketide synthase aspks1. The salicylate hydroxylase asL1 then catalyzes the oxidative dearomatization of 3-methylorcinaldehyde to yield a dearomatized hydroxycyclohexadione. The 2-oxoglutarate-dependent dioxygenase asL3 further catalyzes the oxidative ring expansion to provide the first tropolone metabolite. The cytochrome P450 monooxygenase asR2 allows the synthesis of tropolone hemiacetal. In parallel, a previously unrecognised class of terpene cyclase, asR6, produces alpha-humulene from farnesylpyrophosphate (FPP). The putative Diels-Alderase asR5 probably catalyzes the formation of the tropolone-humulene skeleton by linking humulene and the polyketide moiety. Oxidative-ring contractions catalyzed by asL4 and asL6 then processively remove carbon atoms from the polyketide to yield xenovulene A. This chain is Cytochrome P450 monooxygenase asR2, found in Sarocladium schorii (Acremonium strictum (strain IMI 501407)).